A 732-amino-acid polypeptide reads, in one-letter code: NAD(P)H-quinone oxidoreductase subunit 5, chloroplastic (732 aa).

Transmembrane regions (helical) follow at residues 9-29 (WIVPLCPLISSILIGLGLLFF), 39-59 (ICAISCILSLSVATVICYNLS), 89-109 (IDPLTCIMLVLVTSVAIIVMI), 125-145 (FVYLSLFTASMLGLVLSPNLI), 147-167 (IYIFWELVGMCSYLLIGFWFT), 184-204 (IGDFGLLLGILGFYWITGSFE), 215-235 (LLINNEVSPFFAILCASFLFL), 258-278 (TPISALIHAATMVAAGIYLVA), 291-311 (MSVISWTGAVTALLGATLAFF), 327-347 (LGYMMLALGIGSYRAGLFHLI), 353-373 (KALLFLGSGSVIHSMEPIVGY), 395-415 (GTTFLLGTLSLCGIPPFACFW), 420-440 (IIADSWLYSPFIGWIALLTAG), 544-564 (LIPLLILSIPTLLIGFIGAPL), 604-624 (ISIASFGIFSAFILYGPASIF), and 712-732 (SYLFGLVFGMTILLAVILLII).

This sequence belongs to the complex I subunit 5 family. As to quaternary structure, NDH is composed of at least 16 different subunits, 5 of which are encoded in the nucleus.

It localises to the plastid. It is found in the chloroplast thylakoid membrane. It carries out the reaction a plastoquinone + NADH + (n+1) H(+)(in) = a plastoquinol + NAD(+) + n H(+)(out). The enzyme catalyses a plastoquinone + NADPH + (n+1) H(+)(in) = a plastoquinol + NADP(+) + n H(+)(out). NDH shuttles electrons from NAD(P)H:plastoquinone, via FMN and iron-sulfur (Fe-S) centers, to quinones in the photosynthetic chain and possibly in a chloroplast respiratory chain. The immediate electron acceptor for the enzyme in this species is believed to be plastoquinone. Couples the redox reaction to proton translocation, and thus conserves the redox energy in a proton gradient. This is NAD(P)H-quinone oxidoreductase subunit 5, chloroplastic (ndhF) from Anthoceros angustus (Hornwort).